The chain runs to 380 residues: Ubiquitin-like protein 7 (380 aa).

A Ubiquitin-like domain is found at 18 to 98; sequence TPKSILRLPE…VLRKSWPEPD (81 aa). Residues 200–313 are disordered; the sequence is APMPGTDSSS…SSGVQSGTPI (114 aa). Over residues 206 to 221 the composition is skewed to low complexity; that stretch reads DSSSRSMPSSSYRDMP. At S230 the chain carries Phosphoserine. 2 stretches are compositionally biased toward low complexity: residues 240-253 and 270-293; these read TRST…SSRP and SELA…TPGT. Residues 294-313 are compositionally biased toward polar residues; the sequence is QGHSSGTSPMSSGVQSGTPI. Residues 333 to 377 form the UBA domain; sequence SLQSQWQPQLQQLRDMGIQDDELSLRALQATGGDIQAALELIFAG.

In terms of assembly, binds ubiquitin. Interacts with MAVS; this interaction enhances TRIM21-dependent 'Lys-27'-linked polyubiquitination of MAVS. Post-translationally, deubiquitinated by OTUD4 which stabilizes UBL7 expression. Ubiquitous. Highly expressed in heart, skeletal muscle, testis, thyroid and adrenal gland.

Its function is as follows. Interferon-stimulated protein that positively regulates RNA virus-triggered innate immune signaling. Mechanistically, promotes 'Lys-27'-linked polyubiquitination of MAVS through TRIM21 leading to enhanced the IFN signaling pathway. The sequence is that of Ubiquitin-like protein 7 (UBL7) from Homo sapiens (Human).